Reading from the N-terminus, the 729-residue chain is Serine/threonine-protein kinase TBK1 (729 aa).

Positions 9-310 (WLLSDILGQG…ETSDVLHRMV (302 aa)) constitute a Protein kinase domain. ATP is bound at residue 15–23 (LGQGATANV). Residue Lys-30 forms a Glycyl lysine isopeptide (Lys-Gly) (interchain with G-Cter in ubiquitin) linkage. Lys-38 lines the ATP pocket. Asp-135 functions as the Proton acceptor in the catalytic mechanism. Ser-172 carries the post-translational modification Phosphoserine; by autocatalysis and IKKB. The Ubiquitin-like domain occupies 309 to 385 (MVIHVFSLQH…ENPIFVTSRE (77 aa)). A Glycyl lysine isopeptide (Lys-Gly) (interchain with G-Cter in ubiquitin) cross-link involves residue Lys-401. Coiled coils occupy residues 407–657 (DLDG…LQET) and 658–713 (LPQK…ILER). Residues 621 to 729 (RKMLHLRKQL…DGGLRNVDCL (109 aa)) are interaction with AZI2, TANK and TBKBP1. Lys-670 is covalently cross-linked (Glycyl lysine isopeptide (Lys-Gly) (interchain with G-Cter in ubiquitin)). Phosphoserine is present on Ser-716.

This sequence belongs to the protein kinase superfamily. Ser/Thr protein kinase family. I-kappa-B kinase subfamily. As to quaternary structure, homodimer. Interacts with DDX3X, TIRAP and TRAF2. Part of a ternary complex consisting of TANK, TRAF2 and TBK1. Interacts with AZI2, TANK and TBKBP1; these interactions are mutually exclusive and mediate TBK1 activation. Interacts with GSK3B; this interaction promotes TBK1 self-association and autophosphorylation. Interacts with SIKE1; SIKE1 is associated with TBK1 under physiological condition and dissociated from TBK1 upon viral infection or TLR3 stimulation. Interacts with IRF3, leading to IRF3 phosphorylation. Interacts with RIGI. Interacts with CYLD. Interacts with OPTN and TRAF3. Interacts with SRC. Interacts with the exocyst complex subunit SEC5/EXOC2; this interaction is sufficient to trigger TBK1 activity. Interacts with STING1, leading to STING1 phosphorylation. Interacts with IFIT3 (via N-terminus). Interacts with MAVS; interaction only takes place in the presence of IFIT3 and leads to MAVS phosphorylation. Interacts (via protein kinase domain) with TTLL12 (via TTL domain); the interaction prevents MAVS binding to TBK1. Interacts with TICAM1; this interaction is enhanced in the presence of WDFY1 and leads to TICAM1 phosphorylation. Interacts with TRIM26. Interacts with TRIM23. Interacts with TTC4 and IKBKE. Interacts with HNRNPA2B1. Interacts with DDX3X. Interacts with TRIM14. Interacts with CEP170; efficient complex formation may be dependent on the presence of CCDC61. Interacts with TRAF3IP3. Interacts with HSP90AA1; the interaction mediates TBK1 association with TOMM70. Interacts with TAX1BP1. Interacts with kinase IKBKB; the complex interacts with STAT1, leading to phosphorylation of STAT1 on 'Thr-748' by IKBKB. Interacts with ICOS; this interaction is critical for the maturation of T follicular regulatory cells. Interacts with RNF144B; this interaction prevents TBK1 phosphorylation and subsequent activation. Interacts with ASB8; this interaction promotes TBK1 proteasomal degradation. In terms of processing, autophosphorylation at Ser-172 activates the kinase, and is an essential step for virus-triggered signaling. Phosphorylated by IKBKB/IKKB at Ser-172. Phosphorylation requires homodimerization and ubiquitination at Lys-30 and Lys-401. Dephosphorylated at Ser-172 by PPM1B and this negatively regulates its role in mediating antiviral response. Post-translationally, 'Lys-63'-linked polyubiquitination by MIB1 after RNA virus infection, or by NRDP1 after LPS stimulation at Lys-30 and Lys-401, participates in kinase activation. 'Lys-48'-linked polyubiquitination at Lys-670 by DTX4 leads to proteasomal degradation. 'Lys-48'-linked polyubiquitination by TRAIP also leads to proteasomal degradation. 'Lys-48'-linked polyubiquitination by TRAF7; leading to proteasomal degradation. 'Lys-63'-linked polyubiquitination by RNF128 at Lys-30 and Lys-401 leads to the activation of antiviral responses. 'Lys-48'-linked polyubiquitination after 'lys-33'-linked deubiquitination by USP38 promotes TBK1 degradation.

The protein localises to the cytoplasm. The enzyme catalyses L-seryl-[protein] + ATP = O-phospho-L-seryl-[protein] + ADP + H(+). It carries out the reaction L-threonyl-[protein] + ATP = O-phospho-L-threonyl-[protein] + ADP + H(+). Kinase activity is inhibited competitively by amlexanox. Functionally, serine/threonine kinase that plays an essential role in regulating inflammatory responses to foreign agents. Following activation of toll-like receptors by viral or bacterial components, associates with TRAF3 and TANK and phosphorylates interferon regulatory factors (IRFs) IRF3 and IRF7 as well as DDX3X. This activity allows subsequent homodimerization and nuclear translocation of the IRFs leading to transcriptional activation of pro-inflammatory and antiviral genes including IFNA and IFNB. In order to establish such an antiviral state, TBK1 form several different complexes whose composition depends on the type of cell and cellular stimuli. Thus, several scaffolding molecules including FADD, TRADD, MAVS, AZI2, TANK or TBKBP1/SINTBAD can be recruited to the TBK1-containing-complexes. Plays a key role in IRF3 activation: acts by first phosphorylating innate adapter proteins MAVS, STING1 and TICAM1 on their pLxIS motif, leading to recruitment of IRF3, thereby licensing IRF3 for phosphorylation by TBK1. Under particular conditions, functions as a NF-kappa-B effector by phosphorylating NF-kappa-B inhibitor alpha/NFKBIA, IKBKB or RELA to translocate NF-Kappa-B to the nucleus. Restricts bacterial proliferation by phosphorylating the autophagy receptor OPTN/Optineurin on 'Ser-177', thus enhancing LC3 binding affinity and antibacterial autophagy. Phosphorylates SMCR8 component of the C9orf72-SMCR8 complex, promoting autophagosome maturation. Phosphorylates ATG8 proteins MAP1LC3C and GABARAPL2, thereby preventing their delipidation and premature removal from nascent autophagosomes. Seems to play a role in energy balance regulation by sustaining a state of chronic, low-grade inflammation in obesity, which leads to a negative impact on insulin sensitivity. Acts both as a positive and negative regulator of the mTORC1 complex, depending on the context: activates mTORC1 in response to growth factors by catalyzing phosphorylation of MTOR, while it limits the mTORC1 complex by promoting phosphorylation of RPTOR. Acts as a positive regulator of the mTORC2 complex by mediating phosphorylation of MTOR, leading to increased phosphorylation and activation of AKT1. Phosphorylates and activates AKT1. Involved in the regulation of TNF-induced RIPK1-mediated cell death, probably acting via CYLD phosphorylation that in turn controls RIPK1 ubiquitination status. Also participates in the differentiation of T follicular regulatory cells together with the receptor ICOS. In Mus musculus (Mouse), this protein is Serine/threonine-protein kinase TBK1.